We begin with the raw amino-acid sequence, 230 residues long: MGIPDDPAGSAPENFDLATMRVEYVEKDGCGDLDVDWLGDDPATGWLTLLQTWINDAWKAGLPDANAMVVGTVDADGRPVTRSVLCKSVDPDGITFYTNYDSAKGEHLAVNAYASATFPWYQLGRQVHVRGAVTKVSAEETAEYWSKRPRGSQLGAWASQQSRPIASRAALLEQLAEVTERFADLDEVPVPPNWGGYRIAPEVVEFWQGRENRVHNRIRVTGGRVERLQP.

Substrate contacts are provided by residues 21 to 24 (RVEY) and lysine 87. FMN-binding positions include 82–87 (RSVLCK), 97–98 (YT), lysine 104, and glutamine 126. Substrate-binding residues include tyrosine 144, arginine 148, and serine 152. FMN is bound by residues 161–162 (QS) and tryptophan 207. Residue 213–215 (RVH) coordinates substrate. Arginine 217 is an FMN binding site.

This sequence belongs to the pyridoxamine 5'-phosphate oxidase family. Homodimer. FMN serves as cofactor.

It carries out the reaction pyridoxamine 5'-phosphate + O2 + H2O = pyridoxal 5'-phosphate + H2O2 + NH4(+). The catalysed reaction is pyridoxine 5'-phosphate + O2 = pyridoxal 5'-phosphate + H2O2. It participates in cofactor metabolism; pyridoxal 5'-phosphate salvage; pyridoxal 5'-phosphate from pyridoxamine 5'-phosphate: step 1/1. Its pathway is cofactor metabolism; pyridoxal 5'-phosphate salvage; pyridoxal 5'-phosphate from pyridoxine 5'-phosphate: step 1/1. Functionally, catalyzes the oxidation of either pyridoxine 5'-phosphate (PNP) or pyridoxamine 5'-phosphate (PMP) into pyridoxal 5'-phosphate (PLP). This Mycolicibacterium smegmatis (strain ATCC 700084 / mc(2)155) (Mycobacterium smegmatis) protein is Pyridoxine/pyridoxamine 5'-phosphate oxidase.